The chain runs to 669 residues: Acetolactate synthase, mitochondrial (669 aa).

The N-terminal 140 residues, 1–140 (MTVLAPLRRL…PRHEQAAGHA (140 aa)), are a transit peptide targeting the mitochondrion. Thiamine diphosphate is bound at residue Glu-134. FAD is bound by residues Arg-236, 351-372 (HGSG…LGVR), and 403-422 (DISP…IEGD). Positions 497 to 577 (AHQMWAATFY…VKILILNNEE (81 aa)) are thiamine pyrophosphate binding. Residues Asp-548 and Asn-575 each contribute to the Mg(2+) site.

It belongs to the TPP enzyme family. Mg(2+) is required as a cofactor. Thiamine diphosphate serves as cofactor.

It localises to the mitochondrion. It catalyses the reaction 2 pyruvate + H(+) = (2S)-2-acetolactate + CO2. Its pathway is amino-acid biosynthesis; L-isoleucine biosynthesis; L-isoleucine from 2-oxobutanoate: step 1/4. It functions in the pathway amino-acid biosynthesis; L-valine biosynthesis; L-valine from pyruvate: step 1/4. This is Acetolactate synthase, mitochondrial (ilv1) from Schizosaccharomyces pombe (strain 972 / ATCC 24843) (Fission yeast).